The sequence spans 288 residues: Quinate/shikimate dehydrogenase (288 aa).

2 residues coordinate substrate: Lys71 and Asp107. Residues Ala132–Ala135, Asn155–Asp158, Lys205, Cys232–Asn235, and Gly255 each bind NAD(+).

Belongs to the shikimate dehydrogenase family. Homodimer.

The catalysed reaction is L-quinate + NAD(+) = 3-dehydroquinate + NADH + H(+). It carries out the reaction L-quinate + NADP(+) = 3-dehydroquinate + NADPH + H(+). The enzyme catalyses shikimate + NADP(+) = 3-dehydroshikimate + NADPH + H(+). It catalyses the reaction shikimate + NAD(+) = 3-dehydroshikimate + NADH + H(+). Its pathway is metabolic intermediate biosynthesis; chorismate biosynthesis; chorismate from D-erythrose 4-phosphate and phosphoenolpyruvate: step 4/7. Functionally, the actual biological function of YdiB remains unclear, nor is it known whether 3-dehydroshikimate or quinate represents the natural substrate. Catalyzes the reversible NAD-dependent reduction of both 3-dehydroshikimate (DHSA) and 3-dehydroquinate to yield shikimate (SA) and quinate, respectively. It can use both NAD or NADP for catalysis, however it has higher catalytic efficiency with NAD. This is Quinate/shikimate dehydrogenase from Escherichia coli (strain 55989 / EAEC).